The primary structure comprises 41 residues: Photosystem II reaction center protein J (41 aa).

The helical transmembrane segment at isoleucine 9 to phenylalanine 29 threads the bilayer.

This sequence belongs to the PsbJ family. PSII is composed of 1 copy each of membrane proteins PsbA, PsbB, PsbC, PsbD, PsbE, PsbF, PsbH, PsbI, PsbJ, PsbK, PsbL, PsbM, PsbT, PsbX, PsbY, PsbZ, Psb30/Ycf12, at least 3 peripheral proteins of the oxygen-evolving complex and a large number of cofactors. It forms dimeric complexes.

Its subcellular location is the plastid. It localises to the chloroplast thylakoid membrane. In terms of biological role, one of the components of the core complex of photosystem II (PSII). PSII is a light-driven water:plastoquinone oxidoreductase that uses light energy to abstract electrons from H(2)O, generating O(2) and a proton gradient subsequently used for ATP formation. It consists of a core antenna complex that captures photons, and an electron transfer chain that converts photonic excitation into a charge separation. This chain is Photosystem II reaction center protein J, found in Ostreococcus tauri.